The following is a 282-amino-acid chain: Energy-coupling factor transporter ATP-binding protein EcfA1 (282 aa).

The ABC transporter domain occupies 6–243 (ISFDHVTFTY…VEMLKRIGLD (238 aa)). Position 40 to 47 (40 to 47 (GHNGSGKS)) interacts with ATP.

Belongs to the ABC transporter superfamily. Energy-coupling factor EcfA family. In terms of assembly, forms a stable energy-coupling factor (ECF) transporter complex composed of 2 membrane-embedded substrate-binding proteins (S component), 2 ATP-binding proteins (A component) and 2 transmembrane proteins (T component).

The protein resides in the cell membrane. Its function is as follows. ATP-binding (A) component of a common energy-coupling factor (ECF) ABC-transporter complex. Unlike classic ABC transporters this ECF transporter provides the energy necessary to transport a number of different substrates. The polypeptide is Energy-coupling factor transporter ATP-binding protein EcfA1 (Lactobacillus delbrueckii subsp. bulgaricus (strain ATCC 11842 / DSM 20081 / BCRC 10696 / JCM 1002 / NBRC 13953 / NCIMB 11778 / NCTC 12712 / WDCM 00102 / Lb 14)).